A 493-amino-acid chain; its full sequence is Ribonuclease Y (493 aa).

A helical membrane pass occupies residues 19 to 39 (IFAILFLIIVILNLGLLVFLA). The KH domain maps to 172–241 (SASFTVIESD…LTIRNILIND (70 aa)). The 93-residue stretch at 300–392 (VLSHCLETGF…TQIGDKLSAG (93 aa)) folds into the HD domain.

The protein belongs to the RNase Y family.

It localises to the cell membrane. Functionally, endoribonuclease that initiates mRNA decay. This chain is Ribonuclease Y, found in Mycoplasma pneumoniae (strain ATCC 29342 / M129 / Subtype 1) (Mycoplasmoides pneumoniae).